The chain runs to 473 residues: Cardiolipin synthase C (473 aa).

2 consecutive PLD phosphodiesterase domains span residues 125–152 (LNRR…GDAY) and 364–391 (SGAS…DPRS). Active-site residues include His130, Lys132, Asp137, His369, Lys371, and Asp376.

The protein belongs to the phospholipase D family. Cardiolipin synthase subfamily. ClsC sub-subfamily.

It carries out the reaction a 1,2-diacyl-sn-glycero-3-phospho-(1'-sn-glycerol) + a 1,2-diacyl-sn-glycero-3-phosphoethanolamine = a cardiolipin + ethanolamine. With respect to regulation, full activity requires coexpression with the neighboring gene ymdB. Catalyzes the synthesis of cardiolipin (CL) (diphosphatidylglycerol) from phosphatidylglycerol (PG) and phosphatidylethanolamine (PE). The sequence is that of Cardiolipin synthase C from Escherichia coli (strain K12).